A 210-amino-acid chain; its full sequence is ATP-dependent Clp protease proteolytic subunit (210 aa).

Residue Ser107 is the Nucleophile of the active site. His132 is an active-site residue.

Belongs to the peptidase S14 family. In terms of assembly, fourteen ClpP subunits assemble into 2 heptameric rings which stack back to back to give a disk-like structure with a central cavity, resembling the structure of eukaryotic proteasomes.

It localises to the cytoplasm. The catalysed reaction is Hydrolysis of proteins to small peptides in the presence of ATP and magnesium. alpha-casein is the usual test substrate. In the absence of ATP, only oligopeptides shorter than five residues are hydrolyzed (such as succinyl-Leu-Tyr-|-NHMec, and Leu-Tyr-Leu-|-Tyr-Trp, in which cleavage of the -Tyr-|-Leu- and -Tyr-|-Trp bonds also occurs).. Cleaves peptides in various proteins in a process that requires ATP hydrolysis. Has a chymotrypsin-like activity. Plays a major role in the degradation of misfolded proteins. The chain is ATP-dependent Clp protease proteolytic subunit from Cereibacter sphaeroides (strain ATCC 17029 / ATH 2.4.9) (Rhodobacter sphaeroides).